The primary structure comprises 384 residues: Carbazole 1,9a-dioxygenase, terminal oxygenase component CarAa (384 aa).

The 107-residue stretch at 29–135 (WYPVMFSKEI…VQEAKGCVFI (107 aa)) folds into the Rieske domain. Residues cysteine 69, histidine 71, cysteine 90, and histidine 93 each coordinate [2Fe-2S] cluster.

Homotrimer. Carbazole 1,9a-dioxygenase complex consists of a terminal oxygenase component CarAa, a ferredoxin reductase component CarAd and a ferredoxin component CarAc. The cofactor is [2Fe-2S] cluster.

The enzyme catalyses 9H-carbazole + NADH + O2 + H(+) = 2'-aminobiphenyl-2,3-diol + NAD(+). The catalysed reaction is 9H-carbazole + NADPH + O2 + H(+) = 2'-aminobiphenyl-2,3-diol + NADP(+). In terms of biological role, part of the multicomponent carbazole 1,9a-dioxygenase (CARDO), that converts carbazole (CAR) into 2-aminobiphenyl-2,3-diol. Catalyzes the dioxygenation at the angular (C-9a) and adjacent (C-1) positions of carbazole to yield a highly unstable cis-hydrodiol intermediate which is spontaneously converted to 2-aminobiphenyl-2,3-diol. It is also able to attack the angular position adjacent of hetero atom of heterocyclic aromatic compounds such as polychlorinated dibenzo-p-dioxin (DD) and dibenzofuran (DBF). It was also shown that CARDO has the ability to metabolize biphenyl and polycyclic aromatic hydrocarbons, such as naphthalene and phenanthrene. This chain is Carbazole 1,9a-dioxygenase, terminal oxygenase component CarAa (carAa), found in Metapseudomonas resinovorans (Pseudomonas resinovorans).